The chain runs to 449 residues: Biotin carboxylase (449 aa).

In terms of domain architecture, Biotin carboxylation spans 1–445; it reads MLDKIVIANR…NIHYLEKKLG (445 aa). ATP is bound by residues Lys-116, Lys-159, 165–166, 201–204, His-209, and His-236; these read GG and EKYL. An ATP-grasp domain is found at 120-317; that stretch reads IAAMKKAGVP…LIKEQLRIAA (198 aa). A hydrogencarbonate-binding site is contributed by Lys-238. 2 residues coordinate ATP: Glu-276 and Glu-288. Glu-276, Glu-288, and Asn-290 together coordinate Mg(2+). Positions 276, 288, and 290 each coordinate Mn(2+). Residues Arg-292, Val-295, and Arg-338 each coordinate hydrogencarbonate. Residue Arg-292 is part of the active site. A biotin-binding site is contributed by Arg-338.

Acetyl-CoA carboxylase is a heterohexamer of biotin carboxyl carrier protein, biotin carboxylase and the two subunits of carboxyl transferase in a 2:2 complex. Mg(2+) is required as a cofactor. The cofactor is Mn(2+).

It carries out the reaction N(6)-biotinyl-L-lysyl-[protein] + hydrogencarbonate + ATP = N(6)-carboxybiotinyl-L-lysyl-[protein] + ADP + phosphate + H(+). It participates in lipid metabolism; malonyl-CoA biosynthesis; malonyl-CoA from acetyl-CoA: step 1/1. Its function is as follows. This protein is a component of the acetyl coenzyme A carboxylase complex; first, biotin carboxylase catalyzes the carboxylation of the carrier protein and then the transcarboxylase transfers the carboxyl group to form malonyl-CoA. This is Biotin carboxylase (accC) from Escherichia coli O157:H7.